A 491-amino-acid polypeptide reads, in one-letter code: Large ribosomal subunit protein mL101 (rPPR4) (491 aa).

PPR repeat units lie at residues Thr-122–Pro-156, Ser-157–Pro-191, Asp-192–Ala-226, Asp-228–Arg-262, Asp-263–Ala-293, Ser-298–Asn-328, Asp-333–Leu-367, and Asn-368–Asp-402.

It belongs to the PPR family. P subfamily. In terms of assembly, component of the mitochondrial ribosome large subunit.

The protein resides in the mitochondrion. The sequence is that of Large ribosomal subunit protein mL101 (rPPR4) from Arabidopsis thaliana (Mouse-ear cress).